We begin with the raw amino-acid sequence, 208 residues long: Putative ADP-ribose pyrophosphatase YjhB (208 aa).

The Nudix hydrolase domain maps to 69 to 195 (TPKADVRGAV…NTPSQLSMLF (127 aa)). A Nudix box motif is present at residues 100–121 (GFCEIGLSPAENVVKEIKEESG). Residues Glu-115 and Glu-119 each contribute to the Mg(2+) site.

This sequence belongs to the Nudix hydrolase family. The cofactor is Mg(2+). It depends on Mn(2+) as a cofactor.

Probably mediates the hydrolysis of some nucleoside diphosphate derivatives. This is Putative ADP-ribose pyrophosphatase YjhB (yjhB) from Bacillus subtilis (strain 168).